The chain runs to 179 residues: Replication restart protein DnaT (179 aa).

Residues 156–179 form a disordered region; that stretch reads GGLPKRDVNTVSEPDSQIPPGFRG.

This sequence belongs to the DnaT family. In terms of assembly, homooligomerizes. Interacts with PriB. Component of the replication restart primosome. Primosome assembly occurs via a 'hand-off' mechanism. PriA binds to replication forks, subsequently PriB then DnaT bind; DnaT then displaces ssDNA to generate the helicase loading substrate.

Involved in the restart of stalled replication forks, which reloads the replicative helicase on sites other than the origin of replication. Can function in multiple replication restart pathways. Displaces ssDNA from a PriB-ssDNA complex. Probably forms a spiral filament on ssDNA. In Escherichia coli (strain ATCC 8739 / DSM 1576 / NBRC 3972 / NCIMB 8545 / WDCM 00012 / Crooks), this protein is Replication restart protein DnaT.